We begin with the raw amino-acid sequence, 110 residues long: UPF0060 membrane protein Bcep18194_A4425 (110 aa).

A run of 4 helical transmembrane segments spans residues Ala9 to Leu29, Pro34 to Leu54, Tyr66 to Leu86, and Arg88 to Pro108.

The protein belongs to the UPF0060 family.

Its subcellular location is the cell inner membrane. The protein is UPF0060 membrane protein Bcep18194_A4425 of Burkholderia lata (strain ATCC 17760 / DSM 23089 / LMG 22485 / NCIMB 9086 / R18194 / 383).